The sequence spans 391 residues: Protein-glutamate methylesterase/protein-glutamine glutaminase of group 2 operon (391 aa).

Residues 20 to 138 enclose the Response regulatory domain; the sequence is RVMIVDDSVV…EPQAADIFKH (119 aa). A 4-aspartylphosphate modification is found at Asp71. Residues 196–383 form the CheB-type methylesterase domain; the sequence is PTAPRVLLIG…PLNQIGPKVV (188 aa). Residues Ser207, His235, and Asp331 contribute to the active site.

This sequence belongs to the CheB family. Phosphorylated by CheA. Phosphorylation of the N-terminal regulatory domain activates the methylesterase activity.

The protein resides in the cytoplasm. The enzyme catalyses [protein]-L-glutamate 5-O-methyl ester + H2O = L-glutamyl-[protein] + methanol + H(+). It carries out the reaction L-glutaminyl-[protein] + H2O = L-glutamyl-[protein] + NH4(+). Functionally, involved in chemotaxis. Part of a chemotaxis signal transduction system that modulates chemotaxis in response to various stimuli. Catalyzes the demethylation of specific methylglutamate residues introduced into the chemoreceptors (methyl-accepting chemotaxis proteins or MCP) by CheR. Also mediates the irreversible deamidation of specific glutamine residues to glutamic acid. This is Protein-glutamate methylesterase/protein-glutamine glutaminase of group 2 operon from Rhodopseudomonas palustris (strain ATCC BAA-98 / CGA009).